A 1774-amino-acid polypeptide reads, in one-letter code: MAPDPSRRLCLLLLLLLSCRLVPASADGNSLSPLNPLVWLWPPKTSDSLEGPVSKPQNSSPVQSTENPTTHVVPQDGLTEQQTTPASSELPPEEEEEEDQKAGQGGSPATPAVPIPLVAPAASPDMKEENVAGVGAKILNVAQGIRSFVQLWDEDSTIGHSAGTEVPDSSIPTVLPSPAELSSAPQGSKTTLWLSSAIPSSPDAQTTEAGTLAVPTQLPPFQSNLQAPLGRPSAPPDFPGRAFLSSSTDQGSSWGNQEPPRQPQHLEGKGFLPMTARSSQQHRHSDVHSDIHGHVPLLPLVTGPLVTASLSVHGLLSVPSSDPSGQLSQVAALPGFPGTWVSHVAPSSGTGLSNDSALAGNGSLTSTSRCLPLPPTLTLCSRLGIGHFWLPNHLHHTDSVEVEATVQAWGRFLHTNCHPFLAWFFCLLLAPSCGPGPPPPLPPCRQFCEALEDECWNYLAGDRLPVVCASLPSQEDGYCVFIGPAAENVAEEVGLLQLLGDPLPEKISQIDDPHVGPAYIFGPDSNSGQVAQYHFPKLFFRDFSLLFHVRPATEAAGVLFAITDAAQVVVSLGVKLSEVRDGQQNISLLYTEPGASQTQTGASFRLPAFVGQWTHFALSVDGGSVALYVDCEEFQRVPFARASQGLELERGAGLFVGQAGTADPDKFQGMISELKVRKTPRVSPVHCLDEEDDDEDRASGDFGSGFEESSKSHKEDTSLLPGLPQPPPVTSPPLAGGSTTEDPRTEETEEDAAVDSIGAETLPGTGSSGAWDEAIQNPGRGLIKGGMKGQKGEPGAQGPPGPAGPQGPAGPVVQSPNSQPVPGAQGPPGPQGPPGKDGTPGRDGEPGDPGEDGRPGDTGPQGFPGTPGDVGPKGEKGDPGIGPRGPPGPPGPPGPSFRQDKLTFIDMEGSGFSGDIESLRGPRGFPGPPGPPGVPGLPGEPGRFGINGSYAPGPAGLPGVPGKEGPPGFPGPPGPPGPPGKEGPPGVAGQKGSVGDVGIPGPKGSKGDLGPIGMPGKSGLAGSPGPVGPPGPPGPPGPPGPGFAAGFDDMEGSGIPLWTTARSSDGLQGPPGSPGLKGDPGVAGLPGAKGEVGADGAQGIPGPPGREGAAGSPGPKGEKGMPGEKGNPGKDGVGRPGLPGPPGPPGPVIYVSSEDKAIVSTPGPEGKPGYAGFPGPAGPKGDLGSKGEQGLPGPKGEKGEPGTIFSPDGRALGHPQKGAKGEPGFRGPPGPYGRPGHKGEIGFPGRPGRPGTNGLKGEKGEPGDASLGFSMRGLPGPPGPPGPPGPPGMPIYDSNAFVESGRPGLPGQQGVQGPSGPKGDKGEVGPPGPPGQFPIDLFHLEAEMKGDKGDRGDAGQKGERGEPGAPGGGFFSSSVPGPPGPPGYPGIPGPKGESIRGPPGPPGPQGPPGIGYEGRQGPPGPPGPPGPPSFPGPHRQTVSVPGPPGPPGPPGPPGAMGASAGQVRIWATYQTMLDKIREVPEGWLIFVAEREELYVRVRNGFRKVLLEARTALPRGTGNEVAALQPPLVQLHEGSPYTRREYSYSTARPWRADDILANPPRLPDRQPYPGVPHHHSSYVHLPPARPTLSLAHTHQDFQPVLHLVALNTPLSGGMRGIRGADFQCFQQARAVGLSGTFRAFLSSRLQDLYSIVRRADRGSVPIVNLKDEVLSPSWDSLFSGSQGQLQPGARIFSFDGRDVLRHPAWPQKSVWHGSDPSGRRLMESYCETWRTETTGATGQASSLLSGRLLEQKAASCHNSYIVLCIENSFMTSFSK.

An N-terminal signal peptide occupies residues 1–26 (MAPDPSRRLCLLLLLLLSCRLVPASA). The nonhelical region 1 (NC1) stretch occupies residues 27-785 (DGNSLSPLNP…QNPGRGLIKG (759 aa)). Disordered regions lie at residues 47–113 (DSLE…TPAV) and 218–269 (LPPF…LEGK). 2 stretches are compositionally biased toward polar residues: residues 55-87 (KPQNSSPVQSTENPTTHVVPQDGLTEQQTTPAS) and 244-256 (LSSSTDQGSSWGN). 2 N-linked (GlcNAc...) asparagine glycosylation sites follow: N354 and N361. The FZ domain maps to 365-482 (TSTSRCLPLP…SQEDGYCVFI (118 aa)). Cystine bridges form between C370–C433, C380–C426, C417–C455, C444–C479, and C448–C468. One can recognise a Laminin G-like domain in the interval 522-704 (GPDSNSGQVA…EDRASGDFGS (183 aa)). N-linked (GlcNAc...) asparagine glycosylation is present at N585. The disordered stretch occupies residues 681 to 1458 (RVSPVHCLDE…PPGPPGAMGA (778 aa)). A compositionally biased stretch (basic and acidic residues) spans 708–717 (ESSKSHKEDT). T730 is subject to Phosphothreonine. Positions 786 to 812 (GMKGQKGEPGAQGPPGPAGPQGPAGPV) are triple-helical region 1 (COL1). Low complexity predominate over residues 809-824 (AGPVVQSPNSQPVPGA). A nonhelical region 2 (NC2) region spans residues 813–822 (VQSPNSQPVP). The 56-residue stretch at 823–878 (GAQGPPGPQGPPGKDGTPGRDGEPGDPGEDGRPGDTGPQGFPGTPGDVGPKGEKGD) folds into the Collagen-like 1 domain. The interval 823–896 (GAQGPPGPQG…PGPPGPPGPS (74 aa)) is triple-helical region 2 (COL2). Residues 839–855 (TPGRDGEPGDPGEDGRP) are compositionally biased toward basic and acidic residues. The segment covering 884–895 (RGPPGPPGPPGP) has biased composition (pro residues). Positions 897–920 (FRQDKLTFIDMEGSGFSGDIESLR) are nonhelical region 3 (NC3). O-linked (Xyl...) (chondroitin sulfate) serine glycosylation occurs at S910. Residues 921–1042 (GPRGFPGPPG…PGPPGPPGPG (122 aa)) are triple-helical region 3 (COL3). The segment covering 925-935 (FPGPPGPPGVP) has biased composition (pro residues). N947 is a glycosylation site (N-linked (GlcNAc...) asparagine). The segment covering 951–963 (APGPAGLPGVPGK) has biased composition (low complexity). 2 consecutive Collagen-like domains span residues 953–1007 (GPAG…GSKG) and 1008–1041 (DLGPIGMPGKSGLAGSPGPVGPPGPPGPPGPPGP). Pro residues-rich tracts occupy residues 967-982 (PGFPGPPGPPGPPGKE) and 1026-1041 (PVGPPGPPGPPGPPGP). Positions 1043–1065 (FAAGFDDMEGSGIPLWTTARSSD) are nonhelical region 4 (NC4). Collagen-like domains follow at residues 1066-1117 (GLQG…GPKG), 1118-1147 (EKGMPGEKGNPGKDGVGRPGLPGPPGPPGP), 1162-1202 (PGPE…GEPG), and 1216-1264 (QKGA…EPGD). The segment at 1066 to 1148 (GLQGPPGSPG…PGPPGPPGPV (83 aa)) is triple-helical region 4 (COL4). Positions 1138-1147 (LPGPPGPPGP) are enriched in pro residues. A nonhelical region 5 (NC5) region spans residues 1149–1162 (IYVSSEDKAIVSTP). The segment at 1163 to 1204 (GPEGKPGYAGFPGPAGPKGDLGSKGEQGLPGPKGEKGEPGTI) is triple-helical region 5 (COL5). A nonhelical region 6 (NC6) region spans residues 1205–1217 (FSPDGRALGHPQK). A triple-helical region 6 (COL6) region spans residues 1218 to 1290 (GAKGEPGFRG…PGPPGPPGMP (73 aa)). Over residues 1275-1289 (PGPPGPPGPPGPPGM) the composition is skewed to pro residues. A nonhelical region 7 (NC7) region spans residues 1291–1300 (IYDSNAFVES). The segment covering 1301 to 1317 (GRPGLPGQQGVQGPSGP) has biased composition (low complexity). Residues 1301–1333 (GRPGLPGQQGVQGPSGPKGDKGEVGPPGPPGQF) form a triple-helical region 7 (COL7) region. Residues 1334–1345 (PIDLFHLEAEMK) are nonhelical region 8 (NC8). A compositionally biased stretch (basic and acidic residues) spans 1338–1362 (FHLEAEMKGDKGDRGDAGQKGERGE). Residues 1346 to 1369 (GDKGDRGDAGQKGERGEPGAPGGG) are triple-helical region 8 (COL8). A Cell attachment site motif is present at residues 1351–1353 (RGD). The tract at residues 1370–1376 (FFSSSVP) is nonhelical region 9 (NC9). Composition is skewed to pro residues over residues 1376-1388 (PGPPGPPGYPGIP), 1398-1407 (PPGPPGPQGP), 1418-1431 (PPGPPGPPGPPSFP), and 1441-1453 (PGPPGPPGPPGPP). The triple-helical region 9 (COL9) stretch occupies residues 1377 to 1428 (GPPGPPGYPGIPGPKGESIRGPPGPPGPQGPPGIGYEGRQGPPGPPGPPGPP). The interval 1429–1441 (SFPGPHRQTVSVP) is nonhelical region 10 (NC10). The interval 1442-1459 (GPPGPPGPPGPPGAMGAS) is triple-helical region 10 (COL10). The tract at residues 1460–1774 (AGQVRIWATY…ENSFMTSFSK (315 aa)) is nonhelical region 11 (NC11). The non-collagenous domain 1 association domain stretch occupies residues 1474-1519 (DKIREVPEGWLIFVAEREELYVRVRNGFRKVLLEARTALPRGTGNE). The interval 1520–1590 (VAALQPPLVQ…PPARPTLSLA (71 aa)) is non-collagenous domain 1 hinge region. Positions 1591, 1593, 1595, 1601, and 1666 each coordinate Zn(2+). 2 disulfides stabilise this stretch: C1623-C1763 and C1725-C1755.

Belongs to the multiplexin collagen family. As to quaternary structure, forms homotrimers. Recombinant non-collagenous domain 1 has stronger affinity to NID1, HSPG2 and laminin-1:NID1 complex and lower affinity to FBLN1 and FBLN2 than endostatin. Monomeric. Interacts with KDR/VEGFR2. Interacts with the ITGA5:ITGB1 complex. Interacts with NID1, HSPG2, laminin-1:NID1 complex, FBLN1 and FBLN2. Post-translationally, prolines at the third position of the tripeptide repeating unit (G-X-Y) of the triple-helical regions are hydroxylated. Undergoes proteolytic processing by CTSL/cathepsin-L and elastase-like proteases to generate both non-collagenous domain 1 trimers and endostatin monomers. In tissue extracts (brain, skeletal muscle, heart, kidney, testis and liver) predominantly bands of approximately 38 kDa are detected; recombinant non-collagenous domain 1 shows similar mobility. In vitro, several proteolytic cleavage sites in the non-collagenous domain 1 hinge region generating different endostatin-like peptides are reported. As to expression, expressed in liver, kidney, lung, skeletal muscle and testis.

It localises to the secreted. It is found in the extracellular space. Its subcellular location is the extracellular matrix. The protein localises to the basement membrane. Probably plays a major role in determining the retinal structure as well as in the closure of the neural tube. Functionally, may regulate extracellular matrix-dependent motility and morphogenesis of endothelial and non-endothelial cells; the function requires homotrimerization and implicates MAPK signaling. Its function is as follows. Potently inhibits endothelial cell proliferation and angiogenesis. May inhibit angiogenesis by binding to the heparan sulfate proteoglycans involved in growth factor signaling. Inhibits VEGFA isoform VEGF165-induced endothelial cell proliferation and migration. Seems to inhibit VEGFA-mediated signaling by blocking the interaction of VEGFA to its receptor KDR/VEGFR2. Modulates endothelial cell migration in an integrin-dependent manner implicating integrin ITGA5:ITGB1 and to a lesser extent ITGAV:ITGB3 and ITGAV:ITGB5. May negatively regulate the activity of homotrimeric non-collagenous domain 1. The chain is Collagen alpha-1(XVIII) chain from Mus musculus (Mouse).